The following is a 153-amino-acid chain: 3-hydroxyacyl-[acyl-carrier-protein] dehydratase FabZ (153 aa).

His-54 is a catalytic residue.

This sequence belongs to the thioester dehydratase family. FabZ subfamily.

The protein localises to the cytoplasm. The catalysed reaction is a (3R)-hydroxyacyl-[ACP] = a (2E)-enoyl-[ACP] + H2O. Involved in unsaturated fatty acids biosynthesis. Catalyzes the dehydration of short chain beta-hydroxyacyl-ACPs and long chain saturated and unsaturated beta-hydroxyacyl-ACPs. This is 3-hydroxyacyl-[acyl-carrier-protein] dehydratase FabZ from Chlamydia trachomatis serovar L2 (strain ATCC VR-902B / DSM 19102 / 434/Bu).